Consider the following 526-residue polypeptide: ATP synthase subunit alpha (526 aa).

Position 171-178 (171-178) interacts with ATP; that stretch reads GDRQTGKT.

Belongs to the ATPase alpha/beta chains family. In terms of assembly, F-type ATPases have 2 components, CF(1) - the catalytic core - and CF(0) - the membrane proton channel. CF(1) has five subunits: alpha(3), beta(3), gamma(1), delta(1), epsilon(1). CF(0) has four main subunits: a, b, b' and c.

It localises to the cell inner membrane. It catalyses the reaction ATP + H2O + 4 H(+)(in) = ADP + phosphate + 5 H(+)(out). Produces ATP from ADP in the presence of a proton gradient across the membrane. The alpha chain is a regulatory subunit. In Pelodictyon phaeoclathratiforme (strain DSM 5477 / BU-1), this protein is ATP synthase subunit alpha.